A 329-amino-acid polypeptide reads, in one-letter code: MTVTIYDVAREARVSMATVSRVVNGNQNVKPETRNKVNEVIKRLNYRPNAVARGLASKRTTTVGVIIPDISNVYYSQLARGLEDIATMYKYHSIISNSDNDPEKEKEIFNNLLSKQVDGIIFLGGTISEEIKSLINQSSVPVVVSGTDGKDDHIASVNIDFKQAAEEATQYLIEKGAKTFSLIGGEYSIKAQDDVLEGLKNVLSQHQLKLDDTLHLTGNESYKSGIKTFEQLQSNLPDAVLCISDEQAIGILHSAQDAGVKVPEDLQIISFNNTRLVEMVRPQLSSVIQPLYDIGAVGMRLLTKYMNDEEIENPNVILPHRIEYRGTTQ.

The region spanning 1 to 57 is the HTH lacI-type domain; that stretch reads MTVTIYDVAREARVSMATVSRVVNGNQNVKPETRNKVNEVIKRLNYRPNAVARGLAS. The H-T-H motif DNA-binding region spans 5–24; it reads IYDVAREARVSMATVSRVVN.

Global transcriptional regulator of carbon catabolite repression (CCR) and carbon catabolite activation (CCA), which ensures optimal energy usage under diverse conditions. The chain is Catabolite control protein A (ccpA) from Staphylococcus epidermidis (strain ATCC 12228 / FDA PCI 1200).